A 641-amino-acid polypeptide reads, in one-letter code: Protein zwilch (641 aa).

Residue Ser312 is modified to Phosphoserine.

This sequence belongs to the ZWILCH family. In terms of assembly, component of the RZZ complex composed of rod, Zw10 and Zwilch.

The protein resides in the cytoplasm. It localises to the chromosome. Its subcellular location is the centromere. It is found in the kinetochore. The protein localises to the cytoskeleton. The protein resides in the spindle. In terms of biological role, essential component of the mitotic checkpoint, which prevents cells from prematurely exiting mitosis. Required for the assembly of the dynein-dynactin, Mad2 complexes and spindly/CG15415 onto kinetochores. Its function related to the spindle assembly machinery is proposed to depend on its association in the RZZ complex. Failure to assemble the complex due to the absence of any one of its components, results in the incorrect redistribution of the remaining components to diverse membrane compartments. In Drosophila melanogaster (Fruit fly), this protein is Protein zwilch.